The primary structure comprises 551 residues: ATP synthase subunit alpha (551 aa).

174–181 (GDRQTGKT) lines the ATP pocket.

The protein belongs to the ATPase alpha/beta chains family. F-type ATPases have 2 components, CF(1) - the catalytic core - and CF(0) - the membrane proton channel. CF(1) has five subunits: alpha(3), beta(3), gamma(1), delta(1), epsilon(1). CF(0) has three main subunits: a(1), b(2) and c(9-12). The alpha and beta chains form an alternating ring which encloses part of the gamma chain. CF(1) is attached to CF(0) by a central stalk formed by the gamma and epsilon chains, while a peripheral stalk is formed by the delta and b chains.

It is found in the cell inner membrane. The enzyme catalyses ATP + H2O + 4 H(+)(in) = ADP + phosphate + 5 H(+)(out). Produces ATP from ADP in the presence of a proton gradient across the membrane. The alpha chain is a regulatory subunit. In Salinibacter ruber (strain DSM 13855 / M31), this protein is ATP synthase subunit alpha.